We begin with the raw amino-acid sequence, 71 residues long: Small ribosomal subunit protein eS31 (71 aa).

Zn(2+) is bound by residues C35, C38, C53, and C56. A C4-type zinc finger spans residues 35 to 56 (CPKCGAGVFMAEHLNRYACGKC).

Belongs to the eukaryotic ribosomal protein eS31 family. In terms of assembly, part of the 30S ribosomal subunit. Zn(2+) serves as cofactor.

This Methanococcus vannielii (strain ATCC 35089 / DSM 1224 / JCM 13029 / OCM 148 / SB) protein is Small ribosomal subunit protein eS31.